Consider the following 417-residue polypeptide: Zinc-finger homeodomain protein 4 (417 aa).

Positions 1–12 are enriched in polar residues; that stretch reads MVSILQLQTRTE. Disordered stretches follow at residues 1–22 and 31–50; these read MVSI…ASAA and RQQQ…FQER. A compositionally biased stretch (low complexity) spans 13 to 22; the sequence is ASPASSASAA. Residues 36 to 46 show a composition bias toward acidic residues; the sequence is QEGEEEEEEFE. The segment at 145 to 194 adopts a ZF-HD dimerization-type; degenerate zinc-finger fold; the sequence is YRECLKNHAAAIGGNATDGCGEFMPSGEEGSLEALKCSACGCHRNFHRKE. Disordered stretches follow at residues 281-309 and 361-417; these read DEMD…FRTK and NLAK…LKLE. Residues 286–298 are compositionally biased toward gly residues; the sequence is SGGGGGVGRGGGS. A DNA-binding region (homeobox) is located at residues 303 to 366; sequence KKRFRTKFTA…NNKHNLAKKP (64 aa). The segment covering 368 to 417 has biased composition (pro residues); it reads PSSPPPPPQIPPMSMPPSPPPPQIPPMSMPPSPPPMPMPMPPSPPQLKLE.

Homo- and heterodimer with other ZFHD proteins.

It is found in the nucleus. Its function is as follows. Putative transcription factor. The sequence is that of Zinc-finger homeodomain protein 4 (ZHD4) from Oryza sativa subsp. japonica (Rice).